Here is a 672-residue protein sequence, read N- to C-terminus: Leucine-rich repeat receptor-like protein kinase PXC1 (672 aa).

A signal peptide spans 1-21 (MAAKPLLLPLLLLLHLSITLA). The Extracellular portion of the chain corresponds to 22–269 (QNDTNALTLF…IHSHRGIKPG (248 aa)). N-linked (GlcNAc...) asparagine glycosylation is found at asparagine 23, asparagine 44, and asparagine 101. The stretch at 87-110 (LDQLRLLDLHDNRLNGTVSPLTNC) is one LRR 1 repeat. A Glycyl lysine isopeptide (Lys-Gly) (interchain with G-Cter in ubiquitin) cross-link involves residue lysine 111. 4 LRR repeats span residues 112–134 (NLRL…ISFL), 135–158 (KRMI…ILGF), 160–181 (RVLT…FSQM), and 182–205 (KSLL…VVKK). N-linked (GlcNAc...) asparagine glycans are attached at residues asparagine 188 and asparagine 197. Residues 233–249 (ESSNTDQIVPSNPTSIP) show a composition bias toward polar residues. Residues 233 to 254 (ESSNTDQIVPSNPTSIPHSPVS) form a disordered region. The helical transmembrane segment at 270 to 290 (IIAAVIGGCVAVIVLVSFGFA) threads the bilayer. The Cytoplasmic segment spans residues 291-672 (FCCGRLDRNG…MSPSLATTDG (382 aa)). The interval 300–333 (GERSKSGSVETGFVGGGEGKRRSSYGEGGESDAT) is disordered. Residues 357–645 (KASAEMLGKG…AEVVKMVEEI (289 aa)) enclose the Protein kinase domain. ATP-binding positions include 363–371 (LGKGSLGTV) and lysine 386. The segment at 650–672 (SPVGEDFDESRNSMSPSLATTDG) is disordered. The segment covering 661–672 (NSMSPSLATTDG) has biased composition (polar residues).

Belongs to the protein kinase superfamily. Ser/Thr protein kinase family. As to expression, expressed in the vascular strands of cotyledons, the shoot apex, hypocotyls, roots, leaves, stems and flowers.

The protein resides in the cell membrane. Leucine-rich repeat receptor-like protein kinase involved in secondary cell wall formation in xylem fibers. May play a role in a regulatory network which also incorporates the TDR/PXY signaling pathway and regulates the maturation of interfascicular fiber cells. May promote the initiation of secondary cell wall deposition during the procedure of cell expansion. In Arabidopsis thaliana (Mouse-ear cress), this protein is Leucine-rich repeat receptor-like protein kinase PXC1.